The sequence spans 459 residues: Limonoid 7-O-acetyltransferse (459 aa).

Active-site proton acceptor residues include His167 and Asp391.

Belongs to the plant acyltransferase family. In terms of assembly, monomer. Expressed in maturing fruits and in juice vesicles.

The catalysed reaction is (1S)-1-acetoxy-luvungin A + acetyl-CoA = (1S)-1,7-diacetoxy-luvungin A + CoA. It participates in secondary metabolite biosynthesis; terpenoid biosynthesis. Functionally, acetyltransferase involved in the biosynthesis of limonoids triterpene natural products such as limonin, a compound with insecticidal activity responsible for the bitter taste in citrus. Catalyzes the formation of (1S)-1,7-diacetoxy-luvungin A from (1S)-1-acetoxy-luvungin A. This chain is Limonoid 7-O-acetyltransferse, found in Citrus sinensis (Sweet orange).